Here is a 434-residue protein sequence, read N- to C-terminus: Na(+)/H(+) antiporter NhaA 1 (434 aa).

11 helical membrane-spanning segments follow: residues 34 to 54, 73 to 93, 111 to 131, 141 to 161, 171 to 191, 194 to 214, 233 to 253, 278 to 298, 313 to 333, 346 to 366, and 380 to 400; these read GLLL…PWSA, LTLG…VAGL, ALPV…YVLW, GWAI…AVIS, FLLT…ALFY, ELHL…ALLV, VLVH…GFAV, SAGL…VGGF, VVTG…WLLA, WVDV…SLLI, and HVKV…TGVL.

It belongs to the NhaA Na(+)/H(+) (TC 2.A.33) antiporter family.

It localises to the cell membrane. It catalyses the reaction Na(+)(in) + 2 H(+)(out) = Na(+)(out) + 2 H(+)(in). Functionally, na(+)/H(+) antiporter that extrudes sodium in exchange for external protons. This is Na(+)/H(+) antiporter NhaA 1 from Nocardioides sp. (strain ATCC BAA-499 / JS614).